A 516-amino-acid chain; its full sequence is L-amino acid oxidase bordonein-L (516 aa).

A signal peptide spans 1–18 (MNVFFMFSLLFLAALGSC). Residues Cys28 and Cys189 are joined by a disulfide bond. Residues 61 to 62 (MA), 81 to 82 (EA), Arg89, and 103 to 106 (GPMR) each bind FAD. Substrate contacts are provided by Arg106 and His239. Val279 is a binding site for FAD. Cys349 and Cys430 form a disulfide bridge. Residue Asn379 is glycosylated (N-linked (GlcNAc...) asparagine). Tyr390 lines the substrate pocket. Residues Glu475 and 482 to 487 (GWIDST) contribute to the FAD site. 482–483 (GW) is a substrate binding site.

Homodimer; non-covalently linked. FAD serves as cofactor. N-glycosylated. N-glycan probably consists of the disaccharide N-acetylglucosamine-fucose (HexNAc-Fuc). As to expression, expressed by the venom gland.

The protein resides in the secreted. It carries out the reaction an L-alpha-amino acid + O2 + H2O = a 2-oxocarboxylate + H2O2 + NH4(+). The catalysed reaction is L-leucine + O2 + H2O = 4-methyl-2-oxopentanoate + H2O2 + NH4(+). The enzyme catalyses L-phenylalanine + O2 + H2O = 3-phenylpyruvate + H2O2 + NH4(+). It catalyses the reaction L-tryptophan + O2 + H2O = indole-3-pyruvate + H2O2 + NH4(+). It carries out the reaction L-methionine + O2 + H2O = 4-methylsulfanyl-2-oxobutanoate + H2O2 + NH4(+). The catalysed reaction is L-isoleucine + O2 + H2O = (S)-3-methyl-2-oxopentanoate + H2O2 + NH4(+). The enzyme catalyses L-arginine + O2 + H2O = 5-guanidino-2-oxopentanoate + H2O2 + NH4(+). It catalyses the reaction L-histidine + O2 + H2O = 3-(imidazol-5-yl)pyruvate + H2O2 + NH4(+). Catalyzes an oxidative deamination of predominantly hydrophobic and aromatic L-amino acids, thus producing hydrogen peroxide that may contribute to the diverse toxic effects of this enzyme. Is highly active on L-Met, L-Leu, L-Trp, and L-Phe, moderately active on L-Ile, L-His, and L-Arg, and weakly or not active on L-Gln, L-Val, L-Asn, L-Ala, L-Lys, L-Ser, L-Thr, L-Pro, L-Asp, L-Gly, L-Tyr, L-Cys and L-Glu. This enzyme exhibits diverse biological activities, such as hemorrhage, hemolysis, edema, apoptosis of vascular endothelial cells or tumor cell lines, antibacterial and antiparasitic activities, as well as regulation of platelet aggregation. Its effect on platelets is controversial, since it either induces aggregation or inhibits agonist-induced aggregation. These different effects are probably due to different experimental conditions. In vitro, the enzyme exhibits cytotoxicity against fibroblast cell line and kills Leishmania amazonensis promastigotes, intensified by substrate addition. This is L-amino acid oxidase bordonein-L from Crotalus durissus terrificus (South American rattlesnake).